The sequence spans 37 residues: Large ribosomal subunit protein bL36 (37 aa).

This sequence belongs to the bacterial ribosomal protein bL36 family.

This is Large ribosomal subunit protein bL36 from Legionella pneumophila subsp. pneumophila (strain Philadelphia 1 / ATCC 33152 / DSM 7513).